Consider the following 456-residue polypeptide: Glutamyl-tRNA reductase (456 aa).

Residues 49–52 (TCNR), serine 109, 114–116 (EQQ), and glutamine 120 each bind substrate. The Nucleophile role is filled by cysteine 50. Position 189 to 194 (189 to 194 (GAGSMG)) interacts with NADP(+).

This sequence belongs to the glutamyl-tRNA reductase family. In terms of assembly, homodimer.

It catalyses the reaction (S)-4-amino-5-oxopentanoate + tRNA(Glu) + NADP(+) = L-glutamyl-tRNA(Glu) + NADPH + H(+). It functions in the pathway porphyrin-containing compound metabolism; protoporphyrin-IX biosynthesis; 5-aminolevulinate from L-glutamyl-tRNA(Glu): step 1/2. Functionally, catalyzes the NADPH-dependent reduction of glutamyl-tRNA(Glu) to glutamate 1-semialdehyde (GSA). In Mycolicibacterium vanbaalenii (strain DSM 7251 / JCM 13017 / BCRC 16820 / KCTC 9966 / NRRL B-24157 / PYR-1) (Mycobacterium vanbaalenii), this protein is Glutamyl-tRNA reductase.